The chain runs to 2025 residues: E3 ubiquitin-protein ligase TTC3 (2025 aa).

The segment at 1 to 230 is interaction with POLG; the sequence is MDNFAEGDFT…TQSCMDCIEE (230 aa). TPR repeat units follow at residues 231–264 and 266–298; these read GELM…RPEN and LLYG…KNTW. Ser378 is subject to Phosphoserine; by PKB/AKT2. The segment at 423-458 is disordered; that stretch reads DCHPEFSPPSSQPPKHKGKQKSRNNESEKFSSSSPL. 2 TPR repeats span residues 536-572 and 576-609; these read VLVV…YPSE and CLAY…IYRL. The interval 786-805 is disordered; sequence ERMEEDLRESNPPKNEEQKE. A compositionally biased stretch (basic and acidic residues) spans 793-805; sequence RESNPPKNEEQKE. Ser1009 carries the phosphoserine modification. Disordered stretches follow at residues 1012-1068, 1215-1295, 1773-1842, and 1894-1944; these read APFS…GPFA, KPDV…SCNS, DPSV…SPKK, and ILDE…QKAE. Residues 1019 to 1029 show a composition bias toward basic residues; that stretch reads VKNKSKKKKPK. The segment covering 1038 to 1052 has biased composition (polar residues); the sequence is SGTTSVTSNNEIITS. The residue at position 1061 (Ser1061) is a Phosphoserine. The span at 1894–1912 shows a compositional bias: basic and acidic residues; that stretch reads ILDEQKKKKPNPGKDKRTY. A compositionally biased stretch (polar residues) spans 1913–1928; the sequence is EPSSATPVTRSSQGSP. The RING-type zinc-finger motif lies at 1957 to 1997; the sequence is CEICHEVFKSKNVRVLKCGHKYHKGCFKQWLKGQSACPACQ. The disordered stretch occupies residues 2004 to 2025; that stretch reads EESPSGRGWPSQNQELPSCSSR. A compositionally biased stretch (polar residues) spans 2013-2025; that stretch reads PSQNQELPSCSSR.

In terms of assembly, interacts (when phosphorylated on Ser-378) with AKT1, AKT2 and AKT3 (when phosphorylated). Interacts with CIT. Interacts with POLG. Interacts with HSP70. Interacts with SMURF2. In terms of processing, phosphorylation on Ser-378 by Akt is required for ubiquitin ligase activity. Proteolytically cleaved into differently sized N- and C-terminal fragments. Found in all tissues examined.

It is found in the nucleus. It localises to the cytoplasm. Its subcellular location is the golgi apparatus. The catalysed reaction is S-ubiquitinyl-[E2 ubiquitin-conjugating enzyme]-L-cysteine + [acceptor protein]-L-lysine = [E2 ubiquitin-conjugating enzyme]-L-cysteine + N(6)-ubiquitinyl-[acceptor protein]-L-lysine.. The protein operates within protein modification; protein ubiquitination. Its function is as follows. E3 ubiquitin-protein ligase which catalyzes the formation of 'Lys-48'-polyubiquitin chains. Mediates the ubiquitination and subsequent degradation of phosphorylated Akt (AKT1, AKT2 and AKT3) in the nucleus. Acts as a terminal regulator of Akt signaling after activation; its phosphorylation by Akt, which is a prerequisite for ubiquitin ligase activity, suggests the existence of a regulation mechanism required to control Akt levels after activation. Positively regulates TGFB1-induced epithelial-mesenchymal transition and myofibroblast differentiation by mediating the ubiquitination and subsequent degradation of SMURF2. Regulates neuronal differentiation by regulating actin remodeling and Golgi organization via a signaling cascade involving RHOA, CIT and ROCK. Inhibits cell proliferation. This chain is E3 ubiquitin-protein ligase TTC3 (TTC3), found in Homo sapiens (Human).